The primary structure comprises 194 residues: Ancillary SecYEG translocon subunit (194 aa).

Residues 1–10 (MHLNKMKKVS) are Cytoplasmic-facing. The chain crosses the membrane as a helical span at residues 11-31 (LKTYLVLFFLIFFIFCSFWFI). The Periplasmic segment spans residues 32-194 (KPKEKKLKLE…INMKINEIKR (163 aa)).

Belongs to the YfgM family. In terms of assembly, interacts with the SecYEG translocon. Forms a complex with PpiD.

The protein resides in the cell inner membrane. In terms of biological role, may mediate protein transfer from the SecYEG translocon to the periplasmic chaperone network via its periplasmic C-terminal region. This chain is Ancillary SecYEG translocon subunit, found in Buchnera aphidicola subsp. Schizaphis graminum (strain Sg).